We begin with the raw amino-acid sequence, 354 residues long: 3'-5' exonuclease (354 aa).

The segment at 1 to 120 (MEKYLIKMPI…PSPEKEKPEK (120 aa)) is disordered. Over residues 36-50 (TKKDTPKELKDKENA) the composition is skewed to basic and acidic residues. Positions 59 to 70 (TKGRPGRPAVKR) are enriched in basic residues. A compositionally biased stretch (basic and acidic residues) spans 71 to 91 (KNLDNPDAKAEKKATEEENPP). Phosphoserine is present on residues Ser-104, Ser-110, and Ser-112. A 3'-5' exonuclease domain is found at 146–314 (VLQWVEKQKD…GQVIYRELER (169 aa)). Residues Asp-163, Glu-165, and Asp-301 each coordinate Mg(2+).

The protein belongs to the WRNexo family.

It localises to the nucleus. Has exonuclease activity on both single-stranded and duplex templates bearing overhangs, but not blunt ended duplex DNA, and cleaves in a 3'-5' direction. Essential for the formation of DNA replication focal centers. Has an important role in maintaining genome stability. This Drosophila yakuba (Fruit fly) protein is 3'-5' exonuclease.